Reading from the N-terminus, the 268-residue chain is Chymotrypsin-C (268 aa).

The first 16 residues, 1–16 (MLGITVLAAILACASC), serve as a signal peptide directing secretion. The propeptide at 17–29 (CGNPAFPPNLSTR) is activation peptide. Intrachain disulfides connect C17/C141, C59/C75, C155/C222, C186/C202, and C212/C243. N25 carries an N-linked (GlcNAc...) asparagine glycan. One can recognise a Peptidase S1 domain in the interval 30 to 267 (VVGGEDAVPN…YNDWINEKIQ (238 aa)). The Charge relay system role is filled by H74. Residue N90 is glycosylated (N-linked (GlcNAc...) asparagine). D121 acts as the Charge relay system in catalysis. S216 (charge relay system) is an active-site residue.

Belongs to the peptidase S1 family. Elastase subfamily. Pancreas.

The catalysed reaction is Preferential cleavage: Leu-|-Xaa, Tyr-|-Xaa, Phe-|-Xaa, Met-|-Xaa, Trp-|-Xaa, Gln-|-Xaa, Asn-|-Xaa.. Functionally, regulates activation and degradation of trypsinogens and procarboxypeptidases by targeting specific cleavage sites within their zymogen precursors. Has chymotrypsin-type protease activity and hypocalcemic activity. Cleaves TRY4 and TRY5 and thereby inhibits their autoactivation. The polypeptide is Chymotrypsin-C (Ctrc) (Rattus norvegicus (Rat)).